Reading from the N-terminus, the 166-residue chain is Interferon gamma (166 aa).

The first 23 residues, 1–23 (MKYTSYILAFQLCIILGSSSCYS), serve as a signal peptide directing secretion. Q24 carries the pyrrolidone carboxylic acid modification. N-linked (GlcNAc...) asparagine glycosylation is found at N39, N44, and N106.

Belongs to the type II (or gamma) interferon family. As to quaternary structure, homodimer. Released primarily from activated T lymphocytes.

It is found in the secreted. Its function is as follows. Produced by lymphocytes activated by specific antigens or mitogens. IFN-gamma, in addition to having antiviral activity, has important immunoregulatory functions. It is a potent activator of macrophages, it has antiproliferative effects on transformed cells and it can potentiate the antiviral and antitumor effects of the type I interferons. The polypeptide is Interferon gamma (IFNG) (Marmota monax (Woodchuck)).